We begin with the raw amino-acid sequence, 248 residues long: Adenylate kinase (248 aa).

Gly-37–Thr-42 contacts ATP. Positions Ser-57–Val-86 are NMP. AMP is bound by residues Arg-63, Gln-84–Val-86, Gly-111–Arg-114, and Gln-118. Residues Gly-149–Asp-181 form an LID region. Arg-150 contacts ATP. Arg-178 and Arg-189 together coordinate AMP.

The protein belongs to the adenylate kinase family. As to quaternary structure, monomer.

The protein resides in the cytoplasm. It carries out the reaction AMP + ATP = 2 ADP. In terms of biological role, catalyzes the reversible transfer of the terminal phosphate group between ATP and AMP. Plays an important role in cellular energy homeostasis and in adenine nucleotide metabolism. This chain is Adenylate kinase, found in Giardia intestinalis (Giardia lamblia).